We begin with the raw amino-acid sequence, 593 residues long: Glutamate decarboxylase 1 (593 aa).

Over residues 1–12 (MASSTPSPATSS) the composition is skewed to low complexity. A disordered region spans residues 1-22 (MASSTPSPATSSNAGADPNTTN). Serine 77 carries the post-translational modification Phosphoserine. 189–191 (QLS) is a binding site for 4-aminobutanoate. The residue at position 404 (lysine 404) is an N6-(pyridoxal phosphate)lysine. Arginine 566 lines the 4-aminobutanoate pocket.

This sequence belongs to the group II decarboxylase family. In terms of assembly, homodimer. Requires pyridoxal 5'-phosphate as cofactor. As to expression, expressed in brain and pancreatic islets.

It catalyses the reaction L-glutamate + H(+) = 4-aminobutanoate + CO2. Its function is as follows. Catalyzes the synthesis of the inhibitory neurotransmitter gamma-aminobutyric acid (GABA) with pyridoxal 5'-phosphate as cofactor. This Rattus norvegicus (Rat) protein is Glutamate decarboxylase 1 (Gad1).